Here is a 216-residue protein sequence, read N- to C-terminus: Protein Syd (216 aa).

It belongs to the Syd family.

It localises to the cell inner membrane. In terms of biological role, interacts with the SecY protein in vivo. May bind preferentially to an uncomplexed state of SecY, thus functioning either as a chelating agent for excess SecY in the cell or as a regulatory factor that negatively controls the translocase function. This chain is Protein Syd, found in Shewanella baltica (strain OS155 / ATCC BAA-1091).